The chain runs to 344 residues: MQLSDFTYNLPKQLIAQYPPKRRGESRLLSLEGASGIVKDRQFIELPELLSTKDLLIFNNTKVIPARIQGTKDSGGKIEILIERFLDQHRALAHIRANNPPRAGRRLVMEQSVEVEVKGRVKELFELRFLDPRPLPQLLEAIGQMPLPPYIQRKTVPVDKERYQTIYASRPGAVAAPTAGLHFDKPLLKRLQAQGIRSGYITLHVGAGTFQPVRVKNITQHQMHSEYVEVSEQICAQIRDTQQAGGRVVAVGTTTVRALEAASAKGVIAPYQGETEIFIFPGHRFHTVNALITNFHLPETTLLMLVCAFAGSEHVLAAYRHAIKKGYRFFSYGDAMFITEAKTG.

It belongs to the QueA family. In terms of assembly, monomer.

It is found in the cytoplasm. It catalyses the reaction 7-aminomethyl-7-carbaguanosine(34) in tRNA + S-adenosyl-L-methionine = epoxyqueuosine(34) in tRNA + adenine + L-methionine + 2 H(+). It functions in the pathway tRNA modification; tRNA-queuosine biosynthesis. Functionally, transfers and isomerizes the ribose moiety from AdoMet to the 7-aminomethyl group of 7-deazaguanine (preQ1-tRNA) to give epoxyqueuosine (oQ-tRNA). This chain is S-adenosylmethionine:tRNA ribosyltransferase-isomerase, found in Nitrosococcus oceani (strain ATCC 19707 / BCRC 17464 / JCM 30415 / NCIMB 11848 / C-107).